Consider the following 126-residue polypeptide: Holo-[acyl-carrier-protein] synthase (126 aa).

Mg(2+)-binding residues include aspartate 9 and glutamate 58.

This sequence belongs to the P-Pant transferase superfamily. AcpS family. It depends on Mg(2+) as a cofactor.

The protein resides in the cytoplasm. It carries out the reaction apo-[ACP] + CoA = holo-[ACP] + adenosine 3',5'-bisphosphate + H(+). Its function is as follows. Transfers the 4'-phosphopantetheine moiety from coenzyme A to a Ser of acyl-carrier-protein. The chain is Holo-[acyl-carrier-protein] synthase from Vibrio parahaemolyticus serotype O3:K6 (strain RIMD 2210633).